Here is an 86-residue protein sequence, read N- to C-terminus: MGYYKKYKEEYYTWKKTYYKKYYDNDKKHYDCDKYYDHDKKHYDYDKKYDDHDKKYYDDHDYHYEKKYYDDDDHYYDFVESYKKHH.

This sequence to B.subtilis spore coat protein C.

This is an uncharacterized protein from Bacillus subtilis (strain 168).